Reading from the N-terminus, the 104-residue chain is UPF0125 protein PSPTO_4512 (104 aa).

The protein belongs to the UPF0125 (RnfH) family.

The polypeptide is UPF0125 protein PSPTO_4512 (Pseudomonas syringae pv. tomato (strain ATCC BAA-871 / DC3000)).